Consider the following 353-residue polypeptide: Inactive metacaspase-4 (353 aa).

G2 carries N-myristoyl glycine lipidation.

This sequence belongs to the peptidase C14B family. In terms of processing, palmitoylated. Proteolytic cleavage by MCA3 occurs prior or during secretion and requires MCA4 membrane localization. Cleavage is dispensable for secretion and parasite growth and virulence in the mammalian host. In vitro, can be cleaved by MCA2 but specifically cleaved by MCA3 in vivo.

It is found in the cell projection. The protein resides in the cilium. It localises to the flagellum membrane. The protein localises to the secreted. Functionally, inactive metacaspase which plays a role in parasite bloodstream form growth and in parasite virulence within the mammalian host. In Trypanosoma brucei brucei, this protein is Inactive metacaspase-4.